The following is a 306-amino-acid chain: Ornithine carbamoyltransferase (306 aa).

Residues 51-54 (STRT), glutamine 78, arginine 102, and 129-132 (HPCQ) each bind carbamoyl phosphate. L-ornithine-binding positions include asparagine 160, aspartate 223, and 227–228 (SM). Residues 263 to 264 (CL) and arginine 291 each bind carbamoyl phosphate.

Belongs to the aspartate/ornithine carbamoyltransferase superfamily. OTCase family.

The protein resides in the cytoplasm. The catalysed reaction is carbamoyl phosphate + L-ornithine = L-citrulline + phosphate + H(+). Its pathway is amino-acid biosynthesis; L-arginine biosynthesis; L-arginine from L-ornithine and carbamoyl phosphate: step 1/3. Its function is as follows. Reversibly catalyzes the transfer of the carbamoyl group from carbamoyl phosphate (CP) to the N(epsilon) atom of ornithine (ORN) to produce L-citrulline. In Trichormus variabilis (strain ATCC 29413 / PCC 7937) (Anabaena variabilis), this protein is Ornithine carbamoyltransferase.